The chain runs to 349 residues: METNFSIPLNESEEVLPEPAGHTVLWIFSLLVHGVTFIFGVLGNGLVIWVAGFRMTRTVNTICYLNLALADFSFSAILPFRMVSVAMREKWPFGTFLCKLVHVMIDINLFVSVYLITIIALDRCICVLHPAWAQNHRTMSLAKRVMMGLWILAIVLTLPNFIFWTTISTKNGDTYCIFNFPFWGDTAVERLNAFITMGKVFLILHFIIGFSMPMSIITVCYGIIAAKIHRNHMIKSSSPLRVFAAVVASFFICWFPYELIGILMAVWLKEMLLNGKYKIILVLLNPTSSLAFFNSCLNPILYVFLGSNFQERLIRSLPTSLERALTEVPDSAQTSNTHTNSASPPEETE.

Residues 1–27 (METNFSIPLNESEEVLPEPAGHTVLWI) are Extracellular-facing. N-linked (GlcNAc...) asparagine glycans are attached at residues N4 and N10. The chain crosses the membrane as a helical span at residues 28-50 (FSLLVHGVTFIFGVLGNGLVIWV). Topologically, residues 51-61 (AGFRMTRTVNT) are cytoplasmic. A helical membrane pass occupies residues 62–83 (ICYLNLALADFSFSAILPFRMV). Over 84–100 (SVAMREKWPFGTFLCKL) the chain is Extracellular. A disulfide bridge links C98 with C176. Residues 101-121 (VHVMIDINLFVSVYLITIIAL) form a helical membrane-spanning segment. Over 122-140 (DRCICVLHPAWAQNHRTMS) the chain is Cytoplasmic. Residues 141–162 (LAKRVMMGLWILAIVLTLPNFI) form a helical membrane-spanning segment. The Extracellular portion of the chain corresponds to 163 to 205 (FWTTISTKNGDTYCIFNFPFWGDTAVERLNAFITMGKVFLILH). The helical transmembrane segment at 206–226 (FIIGFSMPMSIITVCYGIIAA) threads the bilayer. Over 227–242 (KIHRNHMIKSSSPLRV) the chain is Cytoplasmic. The helical transmembrane segment at 243–266 (FAAVVASFFICWFPYELIGILMAV) threads the bilayer. Residues 267–286 (WLKEMLLNGKYKIILVLLNP) lie on the Extracellular side of the membrane. The chain crosses the membrane as a helical span at residues 287 to 306 (TSSLAFFNSCLNPILYVFLG). The Cytoplasmic portion of the chain corresponds to 307–349 (SNFQERLIRSLPTSLERALTEVPDSAQTSNTHTNSASPPEETE). A disordered region spans residues 328 to 349 (VPDSAQTSNTHTNSASPPEETE). Residues 331 to 343 (SAQTSNTHTNSAS) are compositionally biased toward polar residues.

It belongs to the G-protein coupled receptor 1 family.

It is found in the cell membrane. Functionally, low affinity receptor for N-formyl-methionyl peptides, which are powerful neutrophils chemotactic factors. Binding of FMLP to the receptor causes activation of neutrophils. This response is mediated via a G-protein that activates a phosphatidylinositol-calcium second messenger system. The protein is N-formyl peptide receptor 3 (FPR3) of Pongo pygmaeus (Bornean orangutan).